A 618-amino-acid chain; its full sequence is Mitochondrial Rho GTPase 1 (618 aa).

Topologically, residues 1–592 (MKKDVRILLV…TQADLKSSTF (592 aa)) are cytoplasmic. A Miro 1 domain is found at 2 to 168 (KKDVRILLVG…FYYAQKAVLH (167 aa)). The GTP site is built by R14, G16, K17, T18, and S19. Residue T18 participates in Mg(2+) binding. The Mg(2+) site is built by P35 and D57. S59 contacts GTP. The residue at position 92 (K92) is an N6-acetyllysine. GTP contacts are provided by N118, K119, D121, A149, and K150. A Glycyl lysine isopeptide (Lys-Gly) (interchain with G-Cter in ubiquitin) cross-link involves residue K153. The 36-residue stretch at 184-219 (ACIKALTRIFKISDQDNDGTLNDAELNFFQRICFNT) folds into the EF-hand 1 domain. Residues D197, D199, D201, T203, and E208 each contribute to the Ca(2+) site. K235 participates in a covalent cross-link: Glycyl lysine isopeptide (Lys-Gly) (interchain with G-Cter in ubiquitin). An EF-hand 2 domain is found at 304 to 339 (HAYLFLQSTFDKHDLDRDCALSPDELKDLFKVFPYI). Ca(2+)-binding residues include D317, D319, D321, A323, and E328. The region spanning 416-579 (RNVFRCNVIG…FVKLTTMAMY (164 aa)) is the Miro 2 domain. GTP-binding residues include N428, C429, G430, K431, S432, G433, and K447. Residue N428 participates in Mg(2+) binding. N428, C429, G430, K431, S432, G433, K447, K454, S477, E478, K528, D530, T558, C559, and N560 together coordinate GDP. Residues K528, D530, T558, and C559 each contribute to the GTP site. K572 is covalently cross-linked (Glycyl lysine isopeptide (Lys-Gly) (interchain with G-Cter in ubiquitin)). Residues 593–615 (WLRASFGATVFAVLGFAMYKALL) form a helical; Anchor for type IV membrane protein membrane-spanning segment. Topologically, residues 616–618 (KQR) are mitochondrial intermembrane.

This sequence belongs to the mitochondrial Rho GTPase family. Homodimer. Interacts with the kinesin-binding proteins TRAK1/OIP106 and TRAK2/GRIF1, forming a link between mitochondria and the trafficking apparatus of the microtubules. Interacts with RAP1GDS1. Interacts with ARMCX1. Found in a complex with KIF5B, OGT, RHOT2 and TRAK1. Post-translationally, ubiquitinated by PRKN during mitophagy, leading to its degradation and enhancement of mitophagy. Deubiquitinated by USP30. Acetylation on Lys-92 decreases sensitivity of mitochondrial transport to elevated Ca(2+) levels, increases mitochondrial transport and promotes axon growth. Deacetylated by HDAC6 which blocks mitochondrial transport and mediates axon growth inhibition. In terms of tissue distribution, ubiquitously expressed. Expressed at high level in heart and skeletal muscle.

It localises to the mitochondrion outer membrane. The catalysed reaction is GTP + H2O = GDP + phosphate + H(+). The enzyme catalyses ATP + H2O = ADP + phosphate + H(+). It carries out the reaction UTP + H2O = UDP + phosphate + H(+). Atypical mitochondrial nucleoside-triphosphatase (NTPase) involved in mitochondrial trafficking. Probably involved in control of anterograde transport of mitochondria and their subcellular distribution. Promotes mitochondrial fission during high calcium conditions. Can hydrolyze GTP, ATP and UTP. The sequence is that of Mitochondrial Rho GTPase 1 (RHOT1) from Homo sapiens (Human).